The following is a 398-amino-acid chain: MTIDLSLKSNQQKTIAVLGASYAGHRAIQVLVASLPEDWRVVVLERNTHANHLYAFPRMSVVRGHEQKVFIPYTNMFKPALDRRDQHVLLHANVLELDQEQRRVSYELIDDKQSGVQWLHWDFLVYALGSHLPDPINVWSNSEHVNTHDGSKMMGVKWLRDAQDRIEKAESIVIVGGGALGVQLATDIAVTYGSSKKVTLTHSRPQLLPRFDPWMHEKTAARLQELGVELALGSRVDLSTVSEDKKRFKLLDGRELQGDLTLFCLGQTPNTSLLGASSLNDSGMAKVEPTLQLSANERIFVIGDAADAFGAINAGHTAWDQAEVAAKNILALIDNKGQAMKLEEYKPTPPAIKVSLGIDRAIRQTMAGELVEVDSGSIDLNSTNMWTRRGLSTDDLWQ.

Functionally, protein of unknown function; part of the gene cluster that mediates the biosynthesis of siderophore ferrichrome A which is contributing to organismal virulence. This is Fe-regulated protein 8 from Mycosarcoma maydis (Corn smut fungus).